The following is a 214-amino-acid chain: Sugar transporter SWEET1 (214 aa).

Helical transmembrane passes span 3-23 (WMWL…SSGL), 38-58 (IQFL…YYGY), 65-85 (LIIV…AYIL), 93-113 (VVSQ…YFTL), 125-145 (LGLF…ADLA), 157-177 (SFPL…YGWV), and 181-201 (LYIT…FWLF). Residues 6–89 (LLSGACIVFT…MAAYILYSLE (84 aa)) enclose the MtN3/slv 1 domain. In terms of domain architecture, MtN3/slv 2 spans 124–207 (QLGLFCSIFT…FWLFSRYPPD (84 aa)).

It belongs to the SWEET sugar transporter family.

Its subcellular location is the golgi apparatus membrane. It localises to the cell membrane. In terms of biological role, mediates sugar transport across membranes. The polypeptide is Sugar transporter SWEET1 (slc50a1) (Xenopus tropicalis (Western clawed frog)).